A 400-amino-acid polypeptide reads, in one-letter code: MSNSAAGRLNQTSHILNESIKNDDISLRRSQPSTTSLQALEHPFKVTVIGSGNWGTTIAKVVAENTALNPHLFVSRVDMWVFEEKIDGKNLTEIINEQHENVKYLPDIKLPENLVANPNLIDSVKGADILIFNIPHQFLPRIVSNLKNHVGPHVRAISCLKGFEVGKKGVQLLSSYVTDELGIQCGALSGANLAPEVAKEHWSETTVAYHIPKDFRGEGKDVDHKLLKALFHRPYFHVNVIEDVAGISIAGALKNVVALGCGFVEGLGWGNNAAAAIQRVGLGEIIKFGQMFFPESRVQTYYQESAGVADLITTCSGGRNVRVAKHMAKTGKSALDAEKELLNGQSAQGIITCKEVHEWLETCEMTHEFPLFEAVYQIVYNNVPMKNLPDMIEELECIAD.

Residues 50–55 (GSGNWG), phenylalanine 138, lysine 161, and alanine 194 each bind NAD(+). Lysine 161 is a binding site for substrate. Lysine 254 serves as the catalytic Proton acceptor. Residues arginine 319 and glutamine 348 each contribute to the NAD(+) site. Residue 319-320 (RN) coordinates substrate.

Belongs to the NAD-dependent glycerol-3-phosphate dehydrogenase family.

It carries out the reaction sn-glycerol 3-phosphate + NAD(+) = dihydroxyacetone phosphate + NADH + H(+). This is Glycerol-3-phosphate dehydrogenase [NAD(+)] 1 (GPD1) from Candida glabrata (strain ATCC 2001 / BCRC 20586 / JCM 3761 / NBRC 0622 / NRRL Y-65 / CBS 138) (Yeast).